The primary structure comprises 648 residues: Activatory protein CHA4 (648 aa).

Positions 1-10 are enriched in pro residues; it reads MMLEPSPPPL. The disordered stretch occupies residues 1-37; sequence MMLEPSPPPLTTTVTPSLPSSLKKSVTDNDQNNNNVP. Low complexity predominate over residues 11–22; the sequence is TTTVTPSLPSSL. A DNA-binding region (zn(2)-C6 fungal-type) is located at residues 44–70; that stretch reads CQNCRRRRRKCNMEKPCSNCIKFRTEC. A disordered region spans residues 140-177; that stretch reads AQSALPSSESNDENESDAFTKKMPSESPPPVGTNSIYP. Phosphoserine occurs at positions 164 and 166.

It is found in the nucleus. Activates the CHA1 gene for L-serine dehydratase. Binds to the DNA sequence 5'-GVGGARAYRTRATTCCRC-3'. This Saccharomyces cerevisiae (strain ATCC 204508 / S288c) (Baker's yeast) protein is Activatory protein CHA4 (CHA4).